The chain runs to 108 residues: TYRO protein tyrosine kinase-binding protein (108 aa).

The first 25 residues, 1-25 (MGRLGPSNGLLPLLLAVGGFSLVQA), serve as a signal peptide directing secretion. Over 26–36 (QRECSCSAVSP) the chain is Extracellular. Residues 37–57 (GILAGIVLGDLVLTLLIALAV) form a helical membrane-spanning segment. Asp46 is a binding site for Ca(2+). Over 58-108 (YSLGRLVPRTRGAVDVTRKQHIAETESAYQELQGQRSDVYSDLNTQRQYYK) the chain is Cytoplasmic. In terms of domain architecture, ITAM spans 75–103 (RKQHIAETESAYQELQGQRSDVYSDLNTQ). Residues Tyr86 and Tyr97 each carry the phosphotyrosine modification.

This sequence belongs to the TYROBP family. In terms of assembly, homodimer; disulfide-linked. Homotrimer; disulfide-linked. Homotetramer; disulfide-linked. Homotrimers and homotetramers form when low levels of partner receptors are available and is competitive with assembly with interacting receptors. They may represent alternative oligomerization states or may be intermediates in the receptor assembly process. Binding of a metal cation aids in homooligomerization through coordination of the metal ion by the subunits of the oligomer. Interacts with TREM1. Interacts with TREM2. Interacts with CLECSF5. Interacts with CD300LB and CD300C2. Interacts with CD300E. Interacts (via ITAM domain) with SYK (via SH2 domains); activates SYK mediating neutrophils and macrophages integrin-mediated activation. Interacts with KLRC2. Interacts with CD300H. Interacts with KLRD1. Interacts with SIGLEC1. In terms of processing, following ligand binding by associated receptors, tyrosine phosphorylated in the ITAM domain which leads to activation of additional tyrosine kinases and subsequent cell activation. In terms of tissue distribution, highly expressed in spleen, liver and thymus. Weakly expressed in lymph nodes. Expressed in peripheral blood leukocytes, granulocytes, macrophages, and monocytes. LPS does not increase expression in granulocytes.

The protein localises to the cell membrane. Its function is as follows. Adapter protein which non-covalently associates with activating receptors found on the surface of a variety of immune cells to mediate signaling and cell activation following ligand binding by the receptors. TYROBP is tyrosine-phosphorylated in the ITAM domain following ligand binding by the associated receptors which leads to activation of additional tyrosine kinases and subsequent cell activation. Also has an inhibitory role in some cells. Non-covalently associates with activating receptors of the CD300 family to mediate cell activation. Also mediates cell activation through association with activating receptors of the CD200R family. Required for neutrophil activation mediated by integrin. Required for the activation of myeloid cells mediated by the CLEC5A/MDL1 receptor. Associates with natural killer (NK) cell receptors such as the KLRD1/KLRC2 heterodimer to mediate NK cell activation. Associates with TREM1 to mediate activation of neutrophils and monocytes. Associates with TREM2 on monocyte-derived dendritic cells to mediate up-regulation of chemokine receptor CCR7 and dendritic cell maturation and survival. Association with TREM2 mediates cytokine-induced formation of multinucleated giant cells which are formed by the fusion of macrophages. Stabilizes the TREM2 C-terminal fragment (TREM2-CTF) produced by TREM2 ectodomain shedding which suppresses the release of pro-inflammatory cytokines. In microglia, required with TREM2 for phagocytosis of apoptotic neurons. Required with ITGAM/CD11B in microglia to control production of microglial superoxide ions which promote the neuronal apoptosis that occurs during brain development. Promotes pro-inflammatory responses in microglia following nerve injury which accelerates degeneration of injured neurons. Positively regulates the expression of the IRAK3/IRAK-M kinase and IL10 production by liver dendritic cells and inhibits their T cell allosimulatory ability. Negatively regulates B cell proliferation. Required for CSF1-mediated osteoclast cytoskeletal organization. Positively regulates multinucleation during osteoclast development. This Sus scrofa (Pig) protein is TYRO protein tyrosine kinase-binding protein.